The following is a 394-amino-acid chain: Saposin-like protein 11 (394 aa).

The first 18 residues, 1-18 (MSVFRFLLFLSLLVGSNA), serve as a signal peptide directing secretion. N-linked (GlcNAc...) asparagine glycosylation is found at N25 and N272. The 89-residue stretch at 306–394 (GNMVCDICEK…SFCKHVPFCK (89 aa)) folds into the Saposin B-type domain. Disulfide bonds link C310-C393, C313-C387, and C343-C359.

In Caenorhabditis elegans, this protein is Saposin-like protein 11 (spp-11).